A 128-amino-acid chain; its full sequence is S-adenosylmethionine decarboxylase proenzyme (128 aa).

Ser61 acts as the Schiff-base intermediate with substrate; via pyruvic acid in catalysis. At Ser61 the chain carries Pyruvic acid (Ser); by autocatalysis. The Proton acceptor; for processing activity role is filled by His66. Cys81 functions as the Proton donor; for catalytic activity in the catalytic mechanism.

This sequence belongs to the prokaryotic AdoMetDC family. Type 1 subfamily. As to quaternary structure, heterotetramer of two alpha and two beta chains arranged as a dimer of alpha/beta heterodimers. Requires pyruvate as cofactor. Is synthesized initially as an inactive proenzyme. Formation of the active enzyme involves a self-maturation process in which the active site pyruvoyl group is generated from an internal serine residue via an autocatalytic post-translational modification. Two non-identical subunits are generated from the proenzyme in this reaction, and the pyruvate is formed at the N-terminus of the alpha chain, which is derived from the carboxyl end of the proenzyme. The post-translation cleavage follows an unusual pathway, termed non-hydrolytic serinolysis, in which the side chain hydroxyl group of the serine supplies its oxygen atom to form the C-terminus of the beta chain, while the remainder of the serine residue undergoes an oxidative deamination to produce ammonia and the pyruvoyl group blocking the N-terminus of the alpha chain.

The enzyme catalyses S-adenosyl-L-methionine + H(+) = S-adenosyl 3-(methylsulfanyl)propylamine + CO2. The protein operates within amine and polyamine biosynthesis; S-adenosylmethioninamine biosynthesis; S-adenosylmethioninamine from S-adenosyl-L-methionine: step 1/1. Functionally, catalyzes the decarboxylation of S-adenosylmethionine to S-adenosylmethioninamine (dcAdoMet), the propylamine donor required for the synthesis of the polyamines spermine and spermidine from the diamine putrescine. The protein is S-adenosylmethionine decarboxylase proenzyme of Parasynechococcus marenigrum (strain WH8102).